A 165-amino-acid chain; its full sequence is Transcription antitermination protein NusB (165 aa).

A disordered region spans residues 139–165; the sequence is EAVRSHRRNKRPAADKPVATDKPAAAE.

This sequence belongs to the NusB family.

In terms of biological role, involved in transcription antitermination. Required for transcription of ribosomal RNA (rRNA) genes. Binds specifically to the boxA antiterminator sequence of the ribosomal RNA (rrn) operons. The polypeptide is Transcription antitermination protein NusB (Laribacter hongkongensis (strain HLHK9)).